We begin with the raw amino-acid sequence, 247 residues long: Adenosine 5'-phosphosulfate reductase (247 aa).

4 residues coordinate [4Fe-4S] cluster: C133, C134, C216, and C219. Positions 222–247 (KPAPGSDPRSGRWAGQAKTECGLHAS) are disordered. The active-site Nucleophile; cysteine thiosulfonate intermediate is C242.

It belongs to the PAPS reductase family. CysH subfamily. The cofactor is [4Fe-4S] cluster.

The protein resides in the cytoplasm. It carries out the reaction [thioredoxin]-disulfide + sulfite + AMP + 2 H(+) = adenosine 5'-phosphosulfate + [thioredoxin]-dithiol. The protein operates within sulfur metabolism; hydrogen sulfide biosynthesis; sulfite from sulfate. Its function is as follows. Catalyzes the formation of sulfite from adenosine 5'-phosphosulfate (APS) using thioredoxin as an electron donor. The polypeptide is Adenosine 5'-phosphosulfate reductase (Rhodococcus opacus (strain B4)).